The chain runs to 94 residues: PqqA binding protein (94 aa).

It belongs to the PqqD family. In terms of assembly, monomer. Interacts with PqqE.

Its pathway is cofactor biosynthesis; pyrroloquinoline quinone biosynthesis. Functionally, functions as a PqqA binding protein and presents PqqA to PqqE, in the pyrroloquinoline quinone (PQQ) biosynthetic pathway. This is PqqA binding protein from Pseudomonas syringae pv. syringae (strain B728a).